A 561-amino-acid chain; its full sequence is Dihydroxy-acid dehydratase (561 aa).

Cysteine 50 is a [2Fe-2S] cluster binding site. Aspartate 82 contacts Mg(2+). Cysteine 123 provides a ligand contact to [2Fe-2S] cluster. Mg(2+) contacts are provided by aspartate 124 and lysine 125. Lysine 125 is modified (N6-carboxylysine). Cysteine 195 provides a ligand contact to [2Fe-2S] cluster. Glutamate 447 contacts Mg(2+). The active-site Proton acceptor is the serine 473.

Belongs to the IlvD/Edd family. In terms of assembly, homodimer. It depends on [2Fe-2S] cluster as a cofactor. Mg(2+) is required as a cofactor.

It catalyses the reaction (2R)-2,3-dihydroxy-3-methylbutanoate = 3-methyl-2-oxobutanoate + H2O. It carries out the reaction (2R,3R)-2,3-dihydroxy-3-methylpentanoate = (S)-3-methyl-2-oxopentanoate + H2O. It functions in the pathway amino-acid biosynthesis; L-isoleucine biosynthesis; L-isoleucine from 2-oxobutanoate: step 3/4. It participates in amino-acid biosynthesis; L-valine biosynthesis; L-valine from pyruvate: step 3/4. Functionally, functions in the biosynthesis of branched-chain amino acids. Catalyzes the dehydration of (2R,3R)-2,3-dihydroxy-3-methylpentanoate (2,3-dihydroxy-3-methylvalerate) into 2-oxo-3-methylpentanoate (2-oxo-3-methylvalerate) and of (2R)-2,3-dihydroxy-3-methylbutanoate (2,3-dihydroxyisovalerate) into 2-oxo-3-methylbutanoate (2-oxoisovalerate), the penultimate precursor to L-isoleucine and L-valine, respectively. The protein is Dihydroxy-acid dehydratase of Rippkaea orientalis (strain PCC 8801 / RF-1) (Cyanothece sp. (strain PCC 8801)).